Consider the following 121-residue polypeptide: Large ribosomal subunit protein uL18 (121 aa).

It belongs to the universal ribosomal protein uL18 family. As to quaternary structure, part of the 50S ribosomal subunit; part of the 5S rRNA/L5/L18/L25 subcomplex. Contacts the 5S and 23S rRNAs.

In terms of biological role, this is one of the proteins that bind and probably mediate the attachment of the 5S RNA into the large ribosomal subunit, where it forms part of the central protuberance. In Paraburkholderia xenovorans (strain LB400), this protein is Large ribosomal subunit protein uL18.